We begin with the raw amino-acid sequence, 161 residues long: Transcriptional repressor NrdR (161 aa).

Residues 1–11 are compositionally biased toward polar residues; that stretch reads MRCPSCNSLDT. Residues 1 to 20 form a disordered region; sequence MRCPSCNSLDTQVKDSRPTE. The segment at 3–34 is a zinc-finger region; that stretch reads CPSCNSLDTQVKDSRPTEDSSVIRRRRVCVTC. The ATP-cone domain occupies 49–139; that stretch reads LTVIKRNGRR…VYRNFREAKD (91 aa).

It belongs to the NrdR family. Zn(2+) is required as a cofactor.

In terms of biological role, negatively regulates transcription of bacterial ribonucleotide reductase nrd genes and operons by binding to NrdR-boxes. This is Transcriptional repressor NrdR from Bradyrhizobium sp. (strain ORS 278).